The sequence spans 182 residues: Large ribosomal subunit protein uL6 (182 aa).

This sequence belongs to the universal ribosomal protein uL6 family. As to quaternary structure, part of the 50S ribosomal subunit.

In terms of biological role, this protein binds to the 23S rRNA, and is important in its secondary structure. It is located near the subunit interface in the base of the L7/L12 stalk, and near the tRNA binding site of the peptidyltransferase center. This Desulforamulus reducens (strain ATCC BAA-1160 / DSM 100696 / MI-1) (Desulfotomaculum reducens) protein is Large ribosomal subunit protein uL6.